Consider the following 259-residue polypeptide: MQLQLICEDAALQPYLDAIASKWQLTHDADSHFALVLTFERLELRKLDEPKLGAIYVDLAGGAVAHRRKFGGGKGQAIAKAAGLNKGATPTVLDGTAGLGRDAFVLASLGCKVQMVERNPVVAALLDDGLTRAKKDDEIGAWVSERMSLLHASSHDALAALASDAEFVRPDVVYLDPMYPHPENKKKTALVKKEMRVFQSLVGADTDADALLTPALALATKRVVVKRPDYAEWLDGVKPSMAIETKKNRFDVYVNASMS.

S-adenosyl-L-methionine contacts are provided by residues 101-102, 117-118, 153-154, and Asp176; these read RD, ER, and SS.

It belongs to the methyltransferase superfamily. RsmJ family.

The protein resides in the cytoplasm. It catalyses the reaction guanosine(1516) in 16S rRNA + S-adenosyl-L-methionine = N(2)-methylguanosine(1516) in 16S rRNA + S-adenosyl-L-homocysteine + H(+). Functionally, specifically methylates the guanosine in position 1516 of 16S rRNA. This is Ribosomal RNA small subunit methyltransferase J from Vibrio vulnificus (strain CMCP6).